A 321-amino-acid polypeptide reads, in one-letter code: Fimbria adhesin protein (321 aa).

A signal peptide spans 1 to 18 (MKKLTLFIGLMALGTTSA).

The protein belongs to the fimbrial protein family.

The protein resides in the fimbrium. The chain is Fimbria adhesin protein (mrkD) from Klebsiella pneumoniae.